A 202-amino-acid chain; its full sequence is Imidazoleglycerol-phosphate dehydratase (202 aa).

Belongs to the imidazoleglycerol-phosphate dehydratase family.

The protein resides in the cytoplasm. It catalyses the reaction D-erythro-1-(imidazol-4-yl)glycerol 3-phosphate = 3-(imidazol-4-yl)-2-oxopropyl phosphate + H2O. The protein operates within amino-acid biosynthesis; L-histidine biosynthesis; L-histidine from 5-phospho-alpha-D-ribose 1-diphosphate: step 6/9. The sequence is that of Imidazoleglycerol-phosphate dehydratase from Acinetobacter baylyi (strain ATCC 33305 / BD413 / ADP1).